A 385-amino-acid chain; its full sequence is Putative ribosomal RNA large subunit methyltransferase MJ1653 (385 aa).

Residues 2–81 form the PUA domain; sequence TTKLYVDFGG…LDENYIREKI (80 aa).

Belongs to the methyltransferase superfamily. RlmI family.

Its subcellular location is the cytoplasm. In Methanocaldococcus jannaschii (strain ATCC 43067 / DSM 2661 / JAL-1 / JCM 10045 / NBRC 100440) (Methanococcus jannaschii), this protein is Putative ribosomal RNA large subunit methyltransferase MJ1653.